Consider the following 535-residue polypeptide: CTP synthase (535 aa).

The tract at residues 1-266 is amidoligase domain; sequence MKFVVITGGV…GDYICERLGL (266 aa). Residue S12 participates in CTP binding. S12 lines the UTP pocket. Residues 13–18 and D70 each bind ATP; that span reads GIGKGI. Positions 70 and 140 each coordinate Mg(2+). Residues 147-149, 187-192, and K223 contribute to the CTP site; these read DIE and KTKPTQ. UTP contacts are provided by residues 187-192 and K223; that span reads KTKPTQ. The 245-residue stretch at 291-535 folds into the Glutamine amidotransferase type-1 domain; the sequence is RIAVVGKYVD…IKAAAGQGPD (245 aa). G355 serves as a coordination point for L-glutamine. C382 functions as the Nucleophile; for glutamine hydrolysis in the catalytic mechanism. L-glutamine contacts are provided by residues 383 to 386, E406, and R464; that span reads LGFQ. Catalysis depends on residues H508 and E510.

It belongs to the CTP synthase family. Homotetramer.

It carries out the reaction UTP + L-glutamine + ATP + H2O = CTP + L-glutamate + ADP + phosphate + 2 H(+). The enzyme catalyses L-glutamine + H2O = L-glutamate + NH4(+). The catalysed reaction is UTP + NH4(+) + ATP = CTP + ADP + phosphate + 2 H(+). It participates in pyrimidine metabolism; CTP biosynthesis via de novo pathway; CTP from UDP: step 2/2. Allosterically activated by GTP, when glutamine is the substrate; GTP has no effect on the reaction when ammonia is the substrate. The allosteric effector GTP functions by stabilizing the protein conformation that binds the tetrahedral intermediate(s) formed during glutamine hydrolysis. Inhibited by the product CTP, via allosteric rather than competitive inhibition. Catalyzes the ATP-dependent amination of UTP to CTP with either L-glutamine or ammonia as the source of nitrogen. Regulates intracellular CTP levels through interactions with the four ribonucleotide triphosphates. This is CTP synthase from Methanopyrus kandleri (strain AV19 / DSM 6324 / JCM 9639 / NBRC 100938).